The chain runs to 45 residues: Photosystem II reaction center protein K (45 aa).

A propeptide spanning residues 1–8 is cleaved from the precursor; that stretch reads MEAALLLA. Residues 24 to 44 form a helical membrane-spanning segment; that stretch reads LPIIPLFFLALAFVWQAAVGF.

This sequence belongs to the PsbK family. As to quaternary structure, PSII is composed of 1 copy each of membrane proteins PsbA, PsbB, PsbC, PsbD, PsbE, PsbF, PsbH, PsbI, PsbJ, PsbK, PsbL, PsbM, PsbT, PsbX, PsbY, PsbZ, Psb30/Ycf12, peripheral proteins PsbO, CyanoQ (PsbQ), PsbU, PsbV and a large number of cofactors. It forms dimeric complexes.

It is found in the cellular thylakoid membrane. Functionally, one of the components of the core complex of photosystem II (PSII). PSII is a light-driven water:plastoquinone oxidoreductase that uses light energy to abstract electrons from H(2)O, generating O(2) and a proton gradient subsequently used for ATP formation. It consists of a core antenna complex that captures photons, and an electron transfer chain that converts photonic excitation into a charge separation. The chain is Photosystem II reaction center protein K from Rippkaea orientalis (strain PCC 8801 / RF-1) (Cyanothece sp. (strain PCC 8801)).